A 1273-amino-acid chain; its full sequence is Paired amphipathic helix protein Sin3a (1273 aa).

Disordered regions lie at residues 1–23 (MKRRLDDQESPVYAAQQRRIPGS) and 87–110 (HPTAVQPHGGQVVQSHAHPAPPVA). Serine 10 carries the post-translational modification Phosphoserine. Residues 119–189 (QRLKVEDALS…MGFNTFLPPG (71 aa)) form the PAH 1 domain. The interval 119–196 (QRLKVEDALS…PPGYKIEVQT (78 aa)) is interaction with HCFC1. Glycyl lysine isopeptide (Lys-Gly) (interchain with G-Cter in SUMO2) cross-links involve residues lysine 122 and lysine 134. Residues 205-297 (PGQVHQIPTH…ISLGTAPSLQ (93 aa)) form a disordered region. Positions 205–480 (PGQVHQIPTH…RKALRSAEAY (276 aa)) are interaction with REST. Residues 228–237 (SQPSAQSAPA) are compositionally biased toward low complexity. Positions 238 to 248 (PAQPAPQPPPA) are enriched in pro residues. Residues 252–266 (KPSQLQAHTPASQQT) are compositionally biased toward polar residues. A compositionally biased stretch (pro residues) spans 267 to 282 (PPLPPYASPRSPPVQP). Phosphoserine is present on serine 277. Threonine 284 bears the Phosphothreonine mark. Positions 284-297 (TPVTISLGTAPSLQ) are enriched in polar residues. Positions 300–383 (QPVEFNHAIN…SEFGQFLPDA (84 aa)) constitute a PAH 2 domain. The segment at 398 to 446 (DSVRNDHGGTVKKPQLNNKPQRPSQNGCQIRRHPTGTTPPVKKKPKLLN) is disordered. Over residues 412–425 (QLNNKPQRPSQNGC) the composition is skewed to polar residues. One can recognise a PAH 3 domain in the interval 456 to 525 (SKHGGGTESL…NWFKNFLGYK (70 aa)). The tract at residues 458–525 (HGGGTESLFF…NWFKNFLGYK (68 aa)) is interaction with SAP30. Lysine 469 carries the post-translational modification N6-acetyllysine. Positions 523–850 (GYKESVHLET…EMDVDEATGA (328 aa)) are interaction with NCOR1. The interval 524-659 (YKESVHLETY…KFRLDNTLGG (136 aa)) is interaction with SUDS3 and SAP130. Lysine 563 participates in a covalent cross-link: Glycyl lysine isopeptide (Lys-Gly) (interchain with G-Cter in SUMO2). Positions 687 to 829 (NPSIAVPIVL…IPDLLFAQRG (143 aa)) are interaction with HDAC1 and ARID4B. Serine 832 and serine 860 each carry phosphoserine. Lysine 865 and lysine 875 each carry N6-acetyllysine. The segment at 888–967 (VNNNWYIFMR…YYPAFLDMVR (80 aa)) is interaction with OGT. Residues 903–932 (CLRLLRICSQAERQIEEENREREWEREVLG) are a coiled coil. Serine 940, serine 1089, and serine 1112 each carry phosphoserine. Positions 1136-1156 (CQRGREQQEKEGKEGNSKKTM) are disordered. The segment covering 1138–1156 (RGREQQEKEGKEGNSKKTM) has biased composition (basic and acidic residues).

Interacts with ARID4B, BRMS1L, HCFC1, HDAC1, HDAC2, MXI1, SAP30L, SAP130, SFPQ and TOPORS. Interacts with OGT (via TPRs 1-6); the interaction mediates transcriptional repression in parallel with histone deacetylase. Interacts with BAZ2A, MXD1, MXD3, MXD4, MBD2, DACH1, NCOR1, NR4A2, REST, RLIM, SAP30, SETDB1, SMYD2, and SUDS3. Interacts with PHF12 in a complex composed of HDAC1, PHF12 and SAP30. Interacts with TET1; the interaction recruits SIN3A to gene promoters. The large PER complex involved in the histone deacetylation is composed of at least HDAC1, PER2, SFPQ and SIN3A. Interacts with KLF11. Interacts with PPHLN1. Found in a complex with YY1, GON4L and HDAC1. Interacts (via PAH2) with FOXK1. Interacts with FOXK2. Found in a complex composed of at least SINHCAF, SIN3A, HDAC1, SAP30, RBBP4, OGT and TET1. Interacts with SINHCAF. Interacts with SPHK2. SUMO1 sumoylated by TOPORS. Probably desumoylated by SENP2. In terms of tissue distribution, expressed in the developing brain, with highest levels of expression detected in the ventricular zone of various cortical regions.

The protein localises to the nucleus. It localises to the nucleolus. Its function is as follows. Acts as a transcriptional repressor. Corepressor for REST. Interacts with MXI1 to repress MYC responsive genes and antagonize MYC oncogenic activities. Also interacts with MXD1-MAX heterodimers to repress transcription by tethering SIN3A to DNA. Acts cooperatively with OGT to repress transcription in parallel with histone deacetylation. Involved in the control of the circadian rhythms. Required for the transcriptional repression of circadian target genes, such as PER1, mediated by the large PER complex through histone deacetylation. Cooperates with FOXK1 to regulate cell cycle progression probably by repressing cell cycle inhibitor genes expression. Required for cortical neuron differentiation and callosal axon elongation. This Homo sapiens (Human) protein is Paired amphipathic helix protein Sin3a.